A 377-amino-acid polypeptide reads, in one-letter code: Nitric oxide reductase FlRd-NAD(+) reductase (377 aa).

Belongs to the FAD-dependent oxidoreductase family. It depends on FAD as a cofactor.

Its subcellular location is the cytoplasm. It carries out the reaction 2 reduced [nitric oxide reductase rubredoxin domain] + NAD(+) + H(+) = 2 oxidized [nitric oxide reductase rubredoxin domain] + NADH. It functions in the pathway nitrogen metabolism; nitric oxide reduction. Functionally, one of at least two accessory proteins for anaerobic nitric oxide (NO) reductase. Reduces the rubredoxin moiety of NO reductase. This chain is Nitric oxide reductase FlRd-NAD(+) reductase, found in Salmonella agona (strain SL483).